A 547-amino-acid chain; its full sequence is Cdc42-interacting protein 4 (547 aa).

The tract at residues 1 to 117 (MDWGTELWDQ…EMKQERKMHF (117 aa)) is required for translocation to the plasma membrane in response to insulin, podosome formation and interaction with AKAP9 and microtubules. Positions 1 to 264 (MDWGTELWDQ…AAESVDAKND (264 aa)) constitute an F-BAR domain. Residues 67–259 (FSQQQSFVQL…EGMKVAAESV (193 aa)) are a coiled coil. The segment at 293-483 (RVPSDSSLGT…YTEFDEDFEE (191 aa)) is interaction with CDC42. Positions 293–547 (RVPSDSSLGT…PTSYLRVTLN (255 aa)) are interaction with PDE6G. Residues 294–323 (VPSDSSLGTPDGRPELRAASSRSRAKRWPF) are disordered. Phosphoserine occurs at positions 296, 298, and 299. Positions 332–425 (TEDFSHLPPE…ESRVLSNRGD (94 aa)) form a coiled coil. The 78-residue stretch at 337–414 (HLPPEQQRKR…VQKYEAWLAE (78 aa)) folds into the REM-1 domain. The tract at residues 415 to 547 (AESRVLSNRG…PTSYLRVTLN (133 aa)) is required for interaction with FASLG and localization to lysosomes. Residues 420–485 (LSNRGDSLSR…EFDEDFEEPA (66 aa)) form a disordered region. Ser-426 carries the post-translational modification Phosphoserine. The interval 431-487 (TRPPDPPTTAPPDSSSSSNNSGSQDNKESSEEPPSEEGQDTPIYTEFDEDFEEPASP) is interaction with DNM2 and WASL. Over residues 441–451 (PPDSSSSSNNS) the composition is skewed to low complexity. Residues 476-547 (EFDEDFEEPA…PTSYLRVTLN (72 aa)) are interaction with DNM1 and WASL. Residues 484–547 (PASPIGQCVA…PTSYLRVTLN (64 aa)) are required for podosome formation. One can recognise an SH3 domain in the interval 486–547 (SPIGQCVAIY…PTSYLRVTLN (62 aa)). The tract at residues 490–547 (QCVAIYHFEGSSEGTVSMSEGEDLSLMEEDKGDGWTRVRRKQGGEGYVPTSYLRVTLN) is interaction with WAS. Residues 492 to 547 (VAIYHFEGSSEGTVSMSEGEDLSLMEEDKGDGWTRVRRKQGGEGYVPTSYLRVTLN) form an interaction with ARHGAP17, DAAM1, DIAPH1 and DIAPH2 region.

It belongs to the FNBP1 family. In terms of assembly, homodimerizes, the dimers can polymerize end-to-end to form filamentous structures. Interacts specifically with GTP-bound CDC42 and RHOQ. Interacts with AKAP9, ARHGAP17, DAAM1, DIAPH1, DIAPH2, DNM1, DNM2, FASLG/FASL, GAPVD1, LYN, microtubules, SRC, WAS/WASP and WASL/N-WASP. Interacts with the ligand binding domain of the thyroid receptor (TR) in the presence of thyroid hormone. May interact with CTNNB1 and HD/HTT. Interacts with PDE6G. Expressed in adrenal gland, aorta, brain, heart, kidney, liver, skeletal muscle and spleen.

The protein localises to the cytoplasm. It localises to the cytoskeleton. It is found in the cell cortex. The protein resides in the lysosome. Its subcellular location is the golgi apparatus. The protein localises to the cell membrane. It localises to the cell projection. It is found in the phagocytic cup. Required to coordinate membrane tubulation with reorganization of the actin cytoskeleton during endocytosis. Also acts as a link between CDC42 signaling and regulation of the actin cytoskeleton. Binds to lipids such as phosphatidylinositol 4,5-bisphosphate and phosphatidylserine and promotes membrane invagination and the formation of tubules. Also enhances actin polymerization in the vicinity of membrane tubules by recruiting WASL/N-WASP which in turn activates the Arp2/3 complex. Actin polymerization and dynamin may promote the fission of membrane tubules to form endocytic vesicles. Required for the formation of podosomes, actin-rich adhesion structures specific to monocyte-derived cells. Required for translocation of GLUT4 to the plasma membrane in response to insulin signaling. May be required for the lysosomal retention of FASLG/FASL. In Rattus norvegicus (Rat), this protein is Cdc42-interacting protein 4 (Trip10).